A 1435-amino-acid polypeptide reads, in one-letter code: Cardiac-enriched FHL2-interacting protein (1435 aa).

Disordered stretches follow at residues 109–176, 203–234, 250–270, and 291–311; these read EEKY…PPKF, SNTHQNSYQPGRKHGEQESSKNPEMACHGSSS, FPSPHHKPVTGEPGRGKGTFL, and KDTAGTVPESKAPKHYGDTTL. Residue Thr-120 is modified to Phosphothreonine. The span at 133–147 shows a compositional bias: polar residues; the sequence is LRSSNKPVSKVSTLI. Over residues 149 to 160 the composition is skewed to basic and acidic residues; it reads SFDRTESQRCES. Ser-323 is modified (phosphoserine). Disordered regions lie at residues 362 to 592, 609 to 772, 795 to 847, 1007 to 1108, 1138 to 1261, and 1363 to 1435; these read EGKA…LTLS, AERS…EKEN, SQGE…SPSS, PEGD…ARVT, SPRG…PGGP, and QGPR…EGIS. Over residues 389–402 the composition is skewed to basic and acidic residues; sequence KGKESLQDTLEEKT. Residue Ser-470 is modified to Phosphoserine. 4 stretches are compositionally biased toward basic and acidic residues: residues 479-493, 522-535, 609-620, and 650-667; these read QEKEPSECQSRDSYK, VLDEKTRGKVDGKQ, AERSSYENKEVE, and CNRDPEPGGATEKMKTHQ. A compositionally biased stretch (polar residues) spans 668–679; that stretch reads LENGLSRSVSQE. The segment covering 727–741 has biased composition (low complexity); the sequence is KFSTSSSDQSFASFD. The segment covering 751–772 has biased composition (basic and acidic residues); sequence NQREDRRKDVSAGDSQKDEKEN. A Phosphoserine modification is found at Ser-816. Positions 831–847 are enriched in polar residues; it reads KGTTFSQAKDLTPSPSS. The segment covering 1055-1066 has biased composition (low complexity); the sequence is NSPNPGSPGESS. Residues 1067-1082 show a composition bias toward polar residues; that stretch reads ACSPAASNIWEESSQA. Over residues 1083 to 1093 the composition is skewed to low complexity; that stretch reads PGGPELLPEEP. Polar residues predominate over residues 1094 to 1105; it reads NQASPWASSSPA. Residues 1182–1193 show a composition bias toward basic residues; it reads RRAKKLASKRRK. Basic and acidic residues predominate over residues 1194 to 1211; that stretch reads TDQAQEKHGESQEGKPCP. Residues 1424–1435 are compositionally biased toward acidic residues; sequence DDLEDFATEGIS.

In terms of assembly, interacts with FHL2. Expressed in the heart and skeletal muscle.

The protein localises to the cytoplasm. The protein resides in the myofibril. It is found in the sarcomere. It localises to the z line. Functionally, plays an important role in cardiomyocyte hypertrophy via activation of the calcineurin/NFAT signaling pathway. The protein is Cardiac-enriched FHL2-interacting protein of Homo sapiens (Human).